Consider the following 361-residue polypeptide: UDP-N-acetylglucosamine--N-acetylmuramyl-(pentapeptide) pyrophosphoryl-undecaprenol N-acetylglucosamine transferase (361 aa).

Residues Ser199 and Gln290 each coordinate UDP-N-acetyl-alpha-D-glucosamine.

Belongs to the glycosyltransferase 28 family. MurG subfamily.

It is found in the cell membrane. The enzyme catalyses Mur2Ac(oyl-L-Ala-gamma-D-Glu-L-Lys-D-Ala-D-Ala)-di-trans,octa-cis-undecaprenyl diphosphate + UDP-N-acetyl-alpha-D-glucosamine = beta-D-GlcNAc-(1-&gt;4)-Mur2Ac(oyl-L-Ala-gamma-D-Glu-L-Lys-D-Ala-D-Ala)-di-trans,octa-cis-undecaprenyl diphosphate + UDP + H(+). It functions in the pathway cell wall biogenesis; peptidoglycan biosynthesis. Its function is as follows. Cell wall formation. Catalyzes the transfer of a GlcNAc subunit on undecaprenyl-pyrophosphoryl-MurNAc-pentapeptide (lipid intermediate I) to form undecaprenyl-pyrophosphoryl-MurNAc-(pentapeptide)GlcNAc (lipid intermediate II). This is UDP-N-acetylglucosamine--N-acetylmuramyl-(pentapeptide) pyrophosphoryl-undecaprenol N-acetylglucosamine transferase from Streptococcus mutans serotype c (strain ATCC 700610 / UA159).